Here is a 323-residue protein sequence, read N- to C-terminus: GILT-like protein C02D5.2 (323 aa).

A helical membrane pass occupies residues 13 to 32 (LICRPILTFSSLHILTAFLI). Asparagine 35 carries an N-linked (GlcNAc...) asparagine glycan. A run of 2 helical transmembrane segments spans residues 37–59 (SYINWSVTIILLILGLYACHRFL) and 87–104 (YIYGTIFILSIFLLYRSL). Asparagine 289 is a glycosylation site (N-linked (GlcNAc...) asparagine).

It belongs to the GILT family.

The protein resides in the membrane. This chain is GILT-like protein C02D5.2, found in Caenorhabditis elegans.